Here is a 78-residue protein sequence, read N- to C-terminus: MANIKSAIKRAELNVKQNNRNSAQKSAMRSAIKAFEANPNEELFRAASSSIDKAKSKGLIHKNKASRDKARLASKLAK.

The interval 55–78 (KSKGLIHKNKASRDKARLASKLAK) is disordered.

The protein belongs to the bacterial ribosomal protein bS20 family.

In terms of biological role, binds directly to 16S ribosomal RNA. This is Small ribosomal subunit protein bS20 from Streptococcus mutans serotype c (strain ATCC 700610 / UA159).